The chain runs to 165 residues: Protein SprT (165 aa).

In terms of domain architecture, SprT-like spans 22 to 163 (LAQANLKLDR…RCVHCGEPLV (142 aa)). A Zn(2+)-binding site is contributed by histidine 78. Glutamate 79 is a catalytic residue. Position 82 (histidine 82) interacts with Zn(2+).

Belongs to the SprT family. Requires Zn(2+) as cofactor.

The protein localises to the cytoplasm. The protein is Protein SprT of Salmonella paratyphi C (strain RKS4594).